Consider the following 444-residue polypeptide: F-box/FBD/LRR-repeat protein At5g53840 (444 aa).

Residues 17–63 (EERLSQLPDHLICVILSHLSTKDAVRTSILSTRWRNLWQLVPVLDFD) enclose the F-box domain. 11 LRR repeats span residues 103-123 (YYLTSWIDLVTRHRIQHIDIS), 124-150 (VFTCSGFGVIPLSLYTCDTLVHLKLSR), 151-171 (VTMVNVEFVSLPCLKILDLDF), 172-197 (VNFTNETTLDKIISCSPVLEELTIVK), 199-224 (SEDNVKIIQVRSQTLKRVEIHRRFDR), 226-252 (NGLVIDTPLLQFLSIKAHSIKSIEFIN), 273-299 (NRSMTRDFFTTISRVRSLVIRHGTIKD), 300-321 (IFHYMELEPLQQFCYLSELSAV), 322-347 (CSISNLEMLLNLLKSCPKLESLSLKL), 369-396 (VSSLKFVKLESQLLGCGTELKVARYFLE), and 398-423 (STILEKLTLKIDYMYKDEANVNHIRQ). The FBD domain occupies 356–408 (EEVMSSTVPPPCLVSSLKFVKLESQLLGCGTELKVARYFLENSTILEKLTLKI).

This is F-box/FBD/LRR-repeat protein At5g53840 from Arabidopsis thaliana (Mouse-ear cress).